The following is a 217-amino-acid chain: Small ribosomal subunit protein uS11m (217 aa).

The transit peptide at 1–59 (MLLQPVWKGCRWTQFVRPIRRWNSTGTNRGVPFSFKDISNQEDITNISYPSSSDSVLTK) directs the protein to the mitochondrion.

The protein belongs to the universal ribosomal protein uS11 family. In terms of assembly, component of the mitochondrial small ribosomal subunit (mt-SSU). Mature yeast 74S mitochondrial ribosomes consist of a small (37S) and a large (54S) subunit. The 37S small subunit contains a 15S ribosomal RNA (15S mt-rRNA) and 34 different proteins. The 54S large subunit contains a 21S rRNA (21S mt-rRNA) and 46 different proteins.

It is found in the mitochondrion. Its function is as follows. Component of the mitochondrial ribosome (mitoribosome), a dedicated translation machinery responsible for the synthesis of mitochondrial genome-encoded proteins, including at least some of the essential transmembrane subunits of the mitochondrial respiratory chain. The mitoribosomes are attached to the mitochondrial inner membrane and translation products are cotranslationally integrated into the membrane. The chain is Small ribosomal subunit protein uS11m (MRPS18) from Saccharomyces cerevisiae (strain ATCC 204508 / S288c) (Baker's yeast).